Reading from the N-terminus, the 1297-residue chain is Phosphoribosylformylglycinamidine synthase (1297 aa).

The segment at 301–329 (TAISPFPGAATGSGGEIRDEGATGRGAKP) is disordered. 308–319 (GAATGSGGEIRD) provides a ligand contact to ATP. Residues D680, E719, N723, and D887 each coordinate Mg(2+). ATP is bound at residue S889. The 253-residue stretch at 1045–1297 (IAILREQGVN…RLFRNARMVF (253 aa)) folds into the Glutamine amidotransferase type-1 domain. Residue C1138 is the Nucleophile of the active site. Catalysis depends on residues H1263 and E1265.

The protein in the N-terminal section; belongs to the FGAMS family. Monomer.

It is found in the cytoplasm. The enzyme catalyses N(2)-formyl-N(1)-(5-phospho-beta-D-ribosyl)glycinamide + L-glutamine + ATP + H2O = 2-formamido-N(1)-(5-O-phospho-beta-D-ribosyl)acetamidine + L-glutamate + ADP + phosphate + H(+). It functions in the pathway purine metabolism; IMP biosynthesis via de novo pathway; 5-amino-1-(5-phospho-D-ribosyl)imidazole from N(2)-formyl-N(1)-(5-phospho-D-ribosyl)glycinamide: step 1/2. Its function is as follows. Phosphoribosylformylglycinamidine synthase involved in the purines biosynthetic pathway. Catalyzes the ATP-dependent conversion of formylglycinamide ribonucleotide (FGAR) and glutamine to yield formylglycinamidine ribonucleotide (FGAM) and glutamate. The sequence is that of Phosphoribosylformylglycinamidine synthase from Haemophilus influenzae (strain ATCC 51907 / DSM 11121 / KW20 / Rd).